A 144-amino-acid chain; its full sequence is UPF0102 protein BPSL3274 (144 aa).

Positions 1–28 are disordered; sequence MCHAREASPGTGEPEAAPRDNFPREAGS. Basic and acidic residues predominate over residues 16–28; the sequence is AAPRDNFPREAGS.

The protein belongs to the UPF0102 family.

The sequence is that of UPF0102 protein BPSL3274 from Burkholderia pseudomallei (strain K96243).